A 589-amino-acid polypeptide reads, in one-letter code: Probable cytochrome P450 49a1 (589 aa).

Positions 56–90 (TGESSNPKKLNVSQQPVTSVATTRTTASSLPAETT) are disordered. Polar residues predominate over residues 57–71 (GESSNPKKLNVSQQP). Positions 72-84 (VTSVATTRTTASS) are enriched in low complexity. Cys536 serves as a coordination point for heme.

It belongs to the cytochrome P450 family. Requires heme as cofactor.

It is found in the endoplasmic reticulum membrane. Its subcellular location is the microsome membrane. May be involved in the metabolism of insect hormones and in the breakdown of synthetic insecticides. This is Probable cytochrome P450 49a1 (Cyp49a1) from Drosophila melanogaster (Fruit fly).